Consider the following 477-residue polypeptide: Adenylyl cyclase-associated protein 2 (477 aa).

A2 carries the N-acetylalanine modification. 2 disordered regions span residues 224 to 262 (SILS…PSRS) and 274 to 324 (ITKG…HAPV). Over residues 231 to 248 (GLPPPPPPPPPPGPPPPF) the composition is skewed to pro residues. Positions 300 to 318 (RSPTKTRTPSPTSSKSNSP) are enriched in low complexity. S301 and S309 each carry phosphoserine. The C-CAP/cofactor C-like domain occupies 318-455 (PQKHAPVLEL…QGDDYREFPI (138 aa)).

Belongs to the CAP family. In terms of tissue distribution, found at relatively high levels in testes, at moderate levels in brain, heart and skeletal muscle, at lower levels in lung, skin, kidney and small intestine, and is undetectable in liver or spleen.

It is found in the cell membrane. Involved in the regulation of actin polymerization. The chain is Adenylyl cyclase-associated protein 2 (Cap2) from Rattus norvegicus (Rat).